The sequence spans 233 residues: Large ribosomal subunit protein uL1 (233 aa).

The protein belongs to the universal ribosomal protein uL1 family. In terms of assembly, part of the 50S ribosomal subunit.

Its function is as follows. Binds directly to 23S rRNA. The L1 stalk is quite mobile in the ribosome, and is involved in E site tRNA release. Protein L1 is also a translational repressor protein, it controls the translation of the L11 operon by binding to its mRNA. The polypeptide is Large ribosomal subunit protein uL1 (Nautilia profundicola (strain ATCC BAA-1463 / DSM 18972 / AmH)).